Reading from the N-terminus, the 313-residue chain is MNTFSQVWVFSDTPSRLPELMNGAQALANQINTFVLNDADGAQAIQLGANHVWKLNGKPDDRMIEDYASVMADTIRQHGADGLVLLPNTRRGKLLAAKLGYRLKAAVSNDASTVSVQDGKATVKHMVYGGLAIGEERIATPYAVLTISSGTFDAAQPDASRTGETHTVEWQAPAVAITRTATQARQSNSVDLDKARLVVSVGRGIGSKENIALAEQLCKAIGAELACSRPVAENEKWMEHERYVGISNLMLKPELYLAVGISGQIQHMVGANASQTIFAINKDKNAPIFQYADYGIVGDAVKILPALTAALAR.

Position 255–283 (255–283) interacts with FAD; sequence LYLAVGISGQIQHMVGANASQTIFAINKD.

This sequence belongs to the ETF alpha-subunit/FixB family. As to quaternary structure, heterodimer of FixA and FixB.

It participates in amine and polyamine metabolism; carnitine metabolism. Its function is as follows. Required for anaerobic carnitine reduction. May bring reductant to CaiA. In Shigella dysenteriae serotype 1 (strain Sd197), this protein is Protein FixB.